We begin with the raw amino-acid sequence, 85 residues long: Large ribosomal subunit protein bL27 (85 aa).

A disordered region spans residues 1–20; that stretch reads MATKKAGGSTRNGRDSEAKR.

It belongs to the bacterial ribosomal protein bL27 family.

This Actinobacillus pleuropneumoniae serotype 5b (strain L20) protein is Large ribosomal subunit protein bL27.